We begin with the raw amino-acid sequence, 206 residues long: Small ribosomal subunit protein uS4 (206 aa).

Residues 96–156 (GRLDNVVYRM…EKAKKQSRVK (61 aa)) form the S4 RNA-binding domain.

Belongs to the universal ribosomal protein uS4 family. In terms of assembly, part of the 30S ribosomal subunit. Contacts protein S5. The interaction surface between S4 and S5 is involved in control of translational fidelity.

One of the primary rRNA binding proteins, it binds directly to 16S rRNA where it nucleates assembly of the body of the 30S subunit. In terms of biological role, with S5 and S12 plays an important role in translational accuracy. In Salmonella typhi, this protein is Small ribosomal subunit protein uS4.